The following is a 230-amino-acid chain: Ion-translocating oxidoreductase complex subunit E (230 aa).

The next 6 helical transmembrane spans lie at 18–38, 39–59, 63–83, 86–106, 128–148, and 182–202; these read ALVQ…ATNA, LGLG…ISTL, TPTE…VSAV, LINA…PLIV, ALDG…LGAM, and PFLL…MLAG.

The protein belongs to the NqrDE/RnfAE family. As to quaternary structure, the complex is composed of six subunits: RsxA, RsxB, RsxC, RsxD, RsxE and RsxG.

The protein resides in the cell inner membrane. Part of a membrane-bound complex that couples electron transfer with translocation of ions across the membrane. Required to maintain the reduced state of SoxR. This Escherichia fergusonii (strain ATCC 35469 / DSM 13698 / CCUG 18766 / IAM 14443 / JCM 21226 / LMG 7866 / NBRC 102419 / NCTC 12128 / CDC 0568-73) protein is Ion-translocating oxidoreductase complex subunit E.